The sequence spans 1872 residues: Chitin synthase 6 (1872 aa).

The tract at residues 1–23 (MAQHLPPVGGNGGAHTQPSLPAL) is disordered. The Myosin motor domain occupies 1-779 (MAQHLPPVGG…CWMEIAQLSD (779 aa)). 104–111 (GESGSGKT) contributes to the ATP binding site. N-linked (GlcNAc...) asparagine glycosylation is found at N123, N291, N428, and N559. Positions 587 to 652 (VMQASVSSKP…VNKPSEEGAS (66 aa)) are disordered. Positions 659–683 (LDNVTKSFHAQNTNAYFVFCLKPND) are actin-binding. Residue N661 is glycosylated (N-linked (GlcNAc...) asparagine). 2 consecutive transmembrane segments (helical) span residues 881–901 (WVFI…QHLG) and 920–940 (FIIW…PMLV). Residues 944-1003 (QYVFTGEELSAYNGKDGKASYAAIRGQVFDIGSFIPRHPLPYLPSKLFTQYAGTDITGLF) enclose the Cytochrome b5 heme-binding domain. N-linked (GlcNAc...) asparagine glycosylation is found at N1030, N1055, and N1120. The chain crosses the membrane as a helical span at residues 1193 to 1213 (FILAVTIILCSIIAFKFLAAL). N1450 and N1556 each carry an N-linked (GlcNAc...) asparagine glycan. Helical transmembrane passes span 1581–1601 (FIVF…AYIV), 1614–1634 (VPVL…IIFI), and 1641–1661 (MIAW…GLPL). One can recognise a DEK-C domain in the interval 1814–1869 (LPSDDALLAEIREILRTADLMTVTKKGVKQELERRFGVNLDSRRAYINSATEALLS).

Belongs to the chitin synthase family. Class V subfamily.

Its subcellular location is the cell membrane. It carries out the reaction [(1-&gt;4)-N-acetyl-beta-D-glucosaminyl](n) + UDP-N-acetyl-alpha-D-glucosamine = [(1-&gt;4)-N-acetyl-beta-D-glucosaminyl](n+1) + UDP + H(+). Polymerizes chitin, a structural polymer of the cell wall and septum, by transferring the sugar moiety of UDP-GlcNAc to the non-reducing end of the growing chitin polymer. Required for appressorium penetration and invasive growth. The polypeptide is Chitin synthase 6 (Pyricularia oryzae (strain 70-15 / ATCC MYA-4617 / FGSC 8958) (Rice blast fungus)).